Reading from the N-terminus, the 83-residue chain is Protein CASPARIAN STRIP INTEGRITY FACTOR 1 (83 aa).

The signal sequence occupies residues 1-22 (MGMSPLTVKKLGFIFMIVSASA). The tract at residues 59–83 (MNTKDYGNNSPSPRLERPPFKLIPN) is disordered. Sulfotyrosine is present on Tyr-64. Residues Pro-69 and Pro-71 each carry the hydroxyproline modification.

Interacts with the specific receptor kinases GSO1 and GSO2. In terms of tissue distribution, expressed exclusively in the root stele.

In terms of biological role, peptide hormone required for contiguous Casparian strip diffusion barrier formation in roots via the regulation of CASPs protein expression and distribution in a GSO1-GSO2 signaling pathway. The Casparian strip is required for ion homeostasis (e.g. iron and potassium ions). This chain is Protein CASPARIAN STRIP INTEGRITY FACTOR 1, found in Arabidopsis thaliana (Mouse-ear cress).